The primary structure comprises 157 residues: Arginine repressor (157 aa).

This sequence belongs to the ArgR family.

The protein localises to the cytoplasm. The protein operates within amino-acid biosynthesis; L-arginine biosynthesis [regulation]. Functionally, regulates arginine biosynthesis genes. The chain is Arginine repressor from Bacteroides fragilis (strain YCH46).